The primary structure comprises 469 residues: Argininosuccinate lyase (469 aa).

Belongs to the lyase 1 family. Argininosuccinate lyase subfamily.

The protein resides in the cytoplasm. It carries out the reaction 2-(N(omega)-L-arginino)succinate = fumarate + L-arginine. Its pathway is amino-acid biosynthesis; L-arginine biosynthesis; L-arginine from L-ornithine and carbamoyl phosphate: step 3/3. The protein is Argininosuccinate lyase of Polaromonas naphthalenivorans (strain CJ2).